A 28-amino-acid chain; its full sequence is 3,4-dihydroxybenzoate decarboxylase (28 aa).

As to quaternary structure, homopentamer.

The catalysed reaction is 3,4-dihydroxybenzoate + H(+) = catechol + CO2. With respect to regulation, inhibited by oxygen. Completely inhibited by HgCl(2). Partially inhibited by ZnSO(4), 2,3,4-trihydroxybeonzoate and 3,4,5-trihydroxybeonzoate. Unaffected by KCl, MnCl(2) or EDTA. Not stimulated by thiamine phosphate, pyridoxal 5'-phosphate or biotin. Not inhibited by hydroxylamine, NaBH(4) or avidin. In terms of biological role, reversibly catalyzes the decarboxylation of 3,4-dihydroxybenzoate to catechol. Inactive toward 4-hydroxybenzoate and other benzoate derivatives. This is 3,4-dihydroxybenzoate decarboxylase from Sedimentibacter hydroxybenzoicus (Clostridium hydroxybenzoicum).